Reading from the N-terminus, the 379-residue chain is GTP cyclohydrolase 1 type 2 homolog (379 aa).

Histidine 64, histidine 65, aspartate 103, histidine 333, and glutamate 337 together coordinate a divalent metal cation.

This sequence belongs to the GTP cyclohydrolase I type 2/NIF3 family. In terms of assembly, homohexamer.

The sequence is that of GTP cyclohydrolase 1 type 2 homolog from Mycobacterium bovis (strain ATCC BAA-935 / AF2122/97).